The sequence spans 193 residues: Probable GTP-binding protein EngB (193 aa).

Residues 22 to 193 (QLPEFALAGR…EAWGALQKWM (172 aa)) form the EngB-type G domain. GTP contacts are provided by residues 30-37 (GRSNVGKS), 57-61 (GKTQT), 75-78 (DVPG), 142-145 (TKAD), and 174-176 (FSA). 2 residues coordinate Mg(2+): serine 37 and threonine 59.

It belongs to the TRAFAC class TrmE-Era-EngA-EngB-Septin-like GTPase superfamily. EngB GTPase family. Requires Mg(2+) as cofactor.

Its function is as follows. Necessary for normal cell division and for the maintenance of normal septation. This Anoxybacillus flavithermus (strain DSM 21510 / WK1) protein is Probable GTP-binding protein EngB.